Here is a 108-residue protein sequence, read N- to C-terminus: Large ribosomal subunit protein eL33A (108 aa).

Belongs to the eukaryotic ribosomal protein eL33 family. Component of the large ribosomal subunit (LSU). Mature yeast ribosomes consist of a small (40S) and a large (60S) subunit. The 40S small subunit contains 1 molecule of ribosomal RNA (18S rRNA) and at least 33 different proteins. The large 60S subunit contains 3 rRNA molecules (25S, 5.8S and 5S rRNA) and at least 46 different proteins.

It localises to the cytoplasm. It is found in the nucleus. The protein localises to the nucleolus. Its function is as follows. Component of the ribosome, a large ribonucleoprotein complex responsible for the synthesis of proteins in the cell. The small ribosomal subunit (SSU) binds messenger RNAs (mRNAs) and translates the encoded message by selecting cognate aminoacyl-transfer RNA (tRNA) molecules. The large subunit (LSU) contains the ribosomal catalytic site termed the peptidyl transferase center (PTC), which catalyzes the formation of peptide bonds, thereby polymerizing the amino acids delivered by tRNAs into a polypeptide chain. The nascent polypeptides leave the ribosome through a tunnel in the LSU and interact with protein factors that function in enzymatic processing, targeting, and the membrane insertion of nascent chains at the exit of the ribosomal tunnel. This chain is Large ribosomal subunit protein eL33A (rpl35b), found in Schizosaccharomyces pombe (strain 972 / ATCC 24843) (Fission yeast).